Reading from the N-terminus, the 159-residue chain is MARESGRKLIASNKKARHDYHIEDTYEAGIVLTGTEVKSLRAGRASLVDGFALIKDGEVWLQNVHIPEYAEGSWTNHEPRRPRKLLLHKREILRLLGKTRETGLTLVPLSLYFRDGKAKVELALARGKRAYDKRQALAERHAQREIARALGRRVKGHRM.

The protein belongs to the SmpB family.

Its subcellular location is the cytoplasm. Functionally, required for rescue of stalled ribosomes mediated by trans-translation. Binds to transfer-messenger RNA (tmRNA), required for stable association of tmRNA with ribosomes. tmRNA and SmpB together mimic tRNA shape, replacing the anticodon stem-loop with SmpB. tmRNA is encoded by the ssrA gene; the 2 termini fold to resemble tRNA(Ala) and it encodes a 'tag peptide', a short internal open reading frame. During trans-translation Ala-aminoacylated tmRNA acts like a tRNA, entering the A-site of stalled ribosomes, displacing the stalled mRNA. The ribosome then switches to translate the ORF on the tmRNA; the nascent peptide is terminated with the 'tag peptide' encoded by the tmRNA and targeted for degradation. The ribosome is freed to recommence translation, which seems to be the essential function of trans-translation. The chain is SsrA-binding protein from Acidothermus cellulolyticus (strain ATCC 43068 / DSM 8971 / 11B).